Consider the following 83-residue polypeptide: Conotoxin Pu6.1 (83 aa).

The signal sequence occupies residues Met1–Gly19. Residues Ala20 to Pro42 constitute a propeptide that is removed on maturation. Cystine bridges form between Cys43–Cys57, Cys50–Cys62, and Cys56–Cys78.

It belongs to the conotoxin I3 superfamily. Expressed by the venom duct.

The protein localises to the secreted. The polypeptide is Conotoxin Pu6.1 (Conus pulicarius (Flea-bitten cone)).